Here is a 601-residue protein sequence, read N- to C-terminus: DNA mismatch repair protein MutL (601 aa).

It belongs to the DNA mismatch repair MutL/HexB family.

This protein is involved in the repair of mismatches in DNA. It is required for dam-dependent methyl-directed DNA mismatch repair. May act as a 'molecular matchmaker', a protein that promotes the formation of a stable complex between two or more DNA-binding proteins in an ATP-dependent manner without itself being part of a final effector complex. This is DNA mismatch repair protein MutL from Listeria monocytogenes serovar 1/2a (strain ATCC BAA-679 / EGD-e).